The primary structure comprises 260 residues: UPF0246 protein Bcen2424_2223 (260 aa).

Belongs to the UPF0246 family.

This is UPF0246 protein Bcen2424_2223 from Burkholderia cenocepacia (strain HI2424).